The sequence spans 413 residues: MKQYKILLFIADGLGDRPVTKLEHKTPLEAVEKPNIGELLKNSIAGLMDPISPGIVPGSDTSHLAIFGIDPFKYYRGRGAFEAIGAGARLKAGDVAFRGNFATVDNNLTVIDRRAGRKVDEAKDLVQELNSKIGEIDGVQVKFYHGTEHRVAVVLSGKGLSDKISDTDPHETGVKVKKSEATDDTREAKITAEVLNKLTNRIYDILSSSELNKKRIERGELPANIVLLRGAAQYVDLPKFYDYTKINAAAVSATALIKGICSQIGMNVVTPKGATGGLDTNYIGKAEEASKLLKEYDMVFLHLKATDAASHDGNIDGKLYAISMIDKMIGRVLDIYGSELIIAITGDHATPVEVKEHTGDPVPFLLYVPYNIVADNVDDFNEKQLRKGSLRIKGLDVINLLLNYSYRYEKFGA.

This sequence belongs to the BPG-independent phosphoglycerate mutase family. A-PGAM subfamily.

The catalysed reaction is (2R)-2-phosphoglycerate = (2R)-3-phosphoglycerate. It participates in carbohydrate degradation; glycolysis; pyruvate from D-glyceraldehyde 3-phosphate: step 3/5. Its function is as follows. Catalyzes the interconversion of 2-phosphoglycerate and 3-phosphoglycerate. This is 2,3-bisphosphoglycerate-independent phosphoglycerate mutase from Sulfolobus acidocaldarius (strain ATCC 33909 / DSM 639 / JCM 8929 / NBRC 15157 / NCIMB 11770).